Here is a 242-residue protein sequence, read N- to C-terminus: Basic agglutinin (242 aa).

2 N-linked (GlcNAc...) asparagine glycosylation sites follow: Asn-45 and Asn-220.

This sequence belongs to the leguminous lectin family.

Lectin. The polypeptide is Basic agglutinin (WBAI) (Psophocarpus tetragonolobus (Winged bean)).